Here is a 248-residue protein sequence, read N- to C-terminus: Ubiquinone/menaquinone biosynthesis C-methyltransferase UbiE (248 aa).

Positions 68 and 92 each coordinate S-adenosyl-L-methionine.

It belongs to the class I-like SAM-binding methyltransferase superfamily. MenG/UbiE family.

It catalyses the reaction a 2-demethylmenaquinol + S-adenosyl-L-methionine = a menaquinol + S-adenosyl-L-homocysteine + H(+). It carries out the reaction a 2-methoxy-6-(all-trans-polyprenyl)benzene-1,4-diol + S-adenosyl-L-methionine = a 5-methoxy-2-methyl-3-(all-trans-polyprenyl)benzene-1,4-diol + S-adenosyl-L-homocysteine + H(+). The protein operates within quinol/quinone metabolism; menaquinone biosynthesis; menaquinol from 1,4-dihydroxy-2-naphthoate: step 2/2. It participates in cofactor biosynthesis; ubiquinone biosynthesis. Its function is as follows. Methyltransferase required for the conversion of demethylmenaquinol (DMKH2) to menaquinol (MKH2) and the conversion of 2-polyprenyl-6-methoxy-1,4-benzoquinol (DDMQH2) to 2-polyprenyl-3-methyl-6-methoxy-1,4-benzoquinol (DMQH2). This chain is Ubiquinone/menaquinone biosynthesis C-methyltransferase UbiE, found in Rickettsia peacockii (strain Rustic).